We begin with the raw amino-acid sequence, 59 residues long: Chromatin protein Cren7 (59 aa).

This sequence belongs to the Cren7 family. Monomer. In terms of processing, methylated at multiple sites, to varying extents.

The protein localises to the chromosome. It localises to the cytoplasm. A chromatin protein, binds double-stranded DNA without sequence specificity. Constrains negative DNA supercoils. The protein is Chromatin protein Cren7 of Pyrobaculum arsenaticum (strain DSM 13514 / JCM 11321 / PZ6).